Reading from the N-terminus, the 441-residue chain is MVMTPREIVQELDKHIIGQDDAKRAVAIALRNRWRRMKIKDPVLRNEIMPKNILMIGPTGVGKTEIARRLANLAKAPFIKVEATKFTEVGYVGRDVDSIIRDLTDMAIKQEREFAMKKVEHLAEDAAEERILDVLLPPARGTLTPGEKNTTARQVFRKQLREGELNDNEIEIEVAATPVGIEIMAPPGMEEMTSQLQSMFQQVGSYRTKTRKMTVAKAMKILREEEAAKLINEEDIKLKAIESVEQNGIVFIDELDKIAKRSDTVSGGDVSREGVQRDLLPLVEGTTVSTKYGMVKSDHILFIASGAFHVAKPSDLIAELQGRLPIRVELSALSVEDFVRILTEPSASLTLQYSALMETEGLTLTFDETGIRRIAEVAWQVNERTENIGARRLYTVMERLLEVVSFEATDKAGETVHVDKAYVDKNLGQLIADEDLARYIL.

Residues Ile17, Gly60–Glu65, Asp253, Glu319, and Arg391 contribute to the ATP site.

The protein belongs to the ClpX chaperone family. HslU subfamily. In terms of assembly, a double ring-shaped homohexamer of HslV is capped on each side by a ring-shaped HslU homohexamer. The assembly of the HslU/HslV complex is dependent on binding of ATP.

It is found in the cytoplasm. ATPase subunit of a proteasome-like degradation complex; this subunit has chaperone activity. The binding of ATP and its subsequent hydrolysis by HslU are essential for unfolding of protein substrates subsequently hydrolyzed by HslV. HslU recognizes the N-terminal part of its protein substrates and unfolds these before they are guided to HslV for hydrolysis. In Legionella pneumophila (strain Paris), this protein is ATP-dependent protease ATPase subunit HslU.